Consider the following 180-residue polypeptide: Protein Flattop (180 aa).

The segment at 111 to 180 (PQISGKASGK…AGDKVLQAQS (70 aa)) is disordered.

This sequence belongs to the Flattop family.

It localises to the cytoplasm. Its subcellular location is the cytoskeleton. The protein resides in the cilium basal body. It is found in the cell projection. The protein localises to the cilium. It localises to the apical cell membrane. Its subcellular location is the cilium axoneme. Microtubule inner protein (MIP) part of the dynein-decorated doublet microtubules (DMTs) in cilia axoneme. Acts as a regulator of cilium basal body docking and positioning in mono- and multiciliated cells. Regulates basal body docking and cilia formation in multiciliated lung cells. Regulates kinocilium positioning and stereocilia bundle morphogenesis in the inner ear. This Xenopus laevis (African clawed frog) protein is Protein Flattop.